Reading from the N-terminus, the 419-residue chain is S-adenosylmethionine synthase (419 aa).

His14 provides a ligand contact to ATP. Asp16 provides a ligand contact to Mg(2+). Glu42 provides a ligand contact to K(+). The L-methionine site is built by Glu55 and Gln98. The segment at 98 to 108 (QSQDIYQGVDR) is flexible loop. ATP is bound by residues 164 to 166 (DSK), 242 to 243 (KF), Asp251, 257 to 258 (RK), Ala274, and Lys278. Asp251 lines the L-methionine pocket. Lys282 contributes to the L-methionine binding site.

The protein belongs to the AdoMet synthase family. Homotetramer; dimer of dimers. Mg(2+) is required as a cofactor. The cofactor is K(+).

Its subcellular location is the cytoplasm. It catalyses the reaction L-methionine + ATP + H2O = S-adenosyl-L-methionine + phosphate + diphosphate. Its pathway is amino-acid biosynthesis; S-adenosyl-L-methionine biosynthesis; S-adenosyl-L-methionine from L-methionine: step 1/1. Functionally, catalyzes the formation of S-adenosylmethionine (AdoMet) from methionine and ATP. The overall synthetic reaction is composed of two sequential steps, AdoMet formation and the subsequent tripolyphosphate hydrolysis which occurs prior to release of AdoMet from the enzyme. The protein is S-adenosylmethionine synthase of Christiangramia forsetii (strain DSM 17595 / CGMCC 1.15422 / KT0803) (Gramella forsetii).